The following is a 340-amino-acid chain: DNA-directed RNA polymerase subunit alpha (340 aa).

Positions 1–233 (MVREEVAVST…DLFIPFLHAE (233 aa)) are alpha N-terminal domain (alpha-NTD). Residues 266 to 340 (KKEIALKCIF…GIDLPKNKRF (75 aa)) are alpha C-terminal domain (alpha-CTD).

It belongs to the RNA polymerase alpha chain family. In plastids the minimal PEP RNA polymerase catalytic core is composed of four subunits: alpha, beta, beta', and beta''. When a (nuclear-encoded) sigma factor is associated with the core the holoenzyme is formed, which can initiate transcription.

It is found in the plastid. Its subcellular location is the chloroplast. It catalyses the reaction RNA(n) + a ribonucleoside 5'-triphosphate = RNA(n+1) + diphosphate. DNA-dependent RNA polymerase catalyzes the transcription of DNA into RNA using the four ribonucleoside triphosphates as substrates. In Calycanthus floridus var. glaucus (Eastern sweetshrub), this protein is DNA-directed RNA polymerase subunit alpha.